The sequence spans 747 residues: Catalase-peroxidase 1 (747 aa).

Positions 1 to 22 (MTDTSDARPPHSDDKTRSHSES) are enriched in basic and acidic residues. A disordered region spans residues 1 to 39 (MTDTSDARPPHSDDKTRSHSESENPAIDSPEPKVHAPLT). Positions 112 to 240 (WHAAGTYRIF…FGATTMGLIY (129 aa)) form a cross-link, tryptophyl-tyrosyl-methioninium (Trp-Tyr) (with M-266). The active-site Proton acceptor is the histidine 113. Residues 240–266 (YVNPEGPEGKPDPLAAAHDIRETFGRM) constitute a cross-link (tryptophyl-tyrosyl-methioninium (Tyr-Met) (with W-112)). A heme b-binding site is contributed by histidine 281.

This sequence belongs to the peroxidase family. Peroxidase/catalase subfamily. As to quaternary structure, homodimer or homotetramer. The cofactor is heme b. Post-translationally, formation of the three residue Trp-Tyr-Met cross-link is important for the catalase, but not the peroxidase activity of the enzyme.

It carries out the reaction H2O2 + AH2 = A + 2 H2O. It catalyses the reaction 2 H2O2 = O2 + 2 H2O. Bifunctional enzyme with both catalase and broad-spectrum peroxidase activity. The sequence is that of Catalase-peroxidase 1 from Mycolicibacterium vanbaalenii (strain DSM 7251 / JCM 13017 / BCRC 16820 / KCTC 9966 / NRRL B-24157 / PYR-1) (Mycobacterium vanbaalenii).